The following is a 120-amino-acid chain: NAD(P)H-quinone oxidoreductase subunit 3, chloroplastic (120 aa).

The next 3 membrane-spanning stretches (helical) occupy residues 9-29 (IFWA…LISA), 64-84 (MFAL…PWAM), and 88-108 (VLGV…IVGL).

This sequence belongs to the complex I subunit 3 family. As to quaternary structure, NDH is composed of at least 16 different subunits, 5 of which are encoded in the nucleus.

It localises to the plastid. The protein localises to the chloroplast thylakoid membrane. It catalyses the reaction a plastoquinone + NADH + (n+1) H(+)(in) = a plastoquinol + NAD(+) + n H(+)(out). It carries out the reaction a plastoquinone + NADPH + (n+1) H(+)(in) = a plastoquinol + NADP(+) + n H(+)(out). In terms of biological role, NDH shuttles electrons from NAD(P)H:plastoquinone, via FMN and iron-sulfur (Fe-S) centers, to quinones in the photosynthetic chain and possibly in a chloroplast respiratory chain. The immediate electron acceptor for the enzyme in this species is believed to be plastoquinone. Couples the redox reaction to proton translocation, and thus conserves the redox energy in a proton gradient. The sequence is that of NAD(P)H-quinone oxidoreductase subunit 3, chloroplastic from Citrus sinensis (Sweet orange).